Reading from the N-terminus, the 179-residue chain is Large ribosomal subunit protein uL6 (179 aa).

This sequence belongs to the universal ribosomal protein uL6 family. As to quaternary structure, part of the 50S ribosomal subunit.

Its function is as follows. This protein binds to the 23S rRNA, and is important in its secondary structure. It is located near the subunit interface in the base of the L7/L12 stalk, and near the tRNA binding site of the peptidyltransferase center. This chain is Large ribosomal subunit protein uL6, found in Methylacidiphilum infernorum (isolate V4) (Methylokorus infernorum (strain V4)).